The following is a 1393-amino-acid chain: DNA-directed RNA polymerase subunit beta' (1393 aa).

4 residues coordinate Zn(2+): C70, C72, C85, and C88. Residues D461, D463, and D465 each coordinate Mg(2+). Zn(2+)-binding residues include C815, C889, C896, and C899.

The protein belongs to the RNA polymerase beta' chain family. As to quaternary structure, the RNAP catalytic core consists of 2 alpha, 1 beta, 1 beta' and 1 omega subunit. When a sigma factor is associated with the core the holoenzyme is formed, which can initiate transcription. Mg(2+) is required as a cofactor. Zn(2+) serves as cofactor.

It carries out the reaction RNA(n) + a ribonucleoside 5'-triphosphate = RNA(n+1) + diphosphate. In terms of biological role, DNA-dependent RNA polymerase catalyzes the transcription of DNA into RNA using the four ribonucleoside triphosphates as substrates. This is DNA-directed RNA polymerase subunit beta' from Vesicomyosocius okutanii subsp. Calyptogena okutanii (strain HA).